Consider the following 125-residue polypeptide: Large ribosomal subunit protein bL19 (125 aa).

It belongs to the bacterial ribosomal protein bL19 family.

Its function is as follows. This protein is located at the 30S-50S ribosomal subunit interface and may play a role in the structure and function of the aminoacyl-tRNA binding site. The polypeptide is Large ribosomal subunit protein bL19 (Ehrlichia chaffeensis (strain ATCC CRL-10679 / Arkansas)).